Here is a 432-residue protein sequence, read N- to C-terminus: Adenylosuccinate synthetase (432 aa).

GTP-binding positions include 13 to 19 (GDEGKGK) and 41 to 43 (GHT). The active-site Proton acceptor is Asp-14. Mg(2+) contacts are provided by Asp-14 and Gly-41. IMP is bound by residues 14–17 (DEGK), 39–42 (NAGH), Thr-130, Arg-144, Gln-225, Thr-240, and Arg-304. The active-site Proton donor is the His-42. 300-306 (ATTGRRR) provides a ligand contact to substrate. GTP is bound by residues Arg-306, 332 to 334 (KLD), and 415 to 417 (STG).

It belongs to the adenylosuccinate synthetase family. Homodimer. Requires Mg(2+) as cofactor.

The protein resides in the cytoplasm. It catalyses the reaction IMP + L-aspartate + GTP = N(6)-(1,2-dicarboxyethyl)-AMP + GDP + phosphate + 2 H(+). It functions in the pathway purine metabolism; AMP biosynthesis via de novo pathway; AMP from IMP: step 1/2. Plays an important role in the de novo pathway of purine nucleotide biosynthesis. Catalyzes the first committed step in the biosynthesis of AMP from IMP. The protein is Adenylosuccinate synthetase of Escherichia coli (strain K12).